A 576-amino-acid polypeptide reads, in one-letter code: MIVFGWAVFLASRSLGQGLLLTLEEHIAHFLGTGGAATTMGNSCICRDDSGTDDSVDTQQQQAENSAVPTADTRSQPRDPVRPPRRGRGPHEPRRKKQNVDGLVLDTLAVIRTLVDNDQEPPYSMITLHEMAETDEGWLDVVQSLIRVIPLEDPLGPAVITLLLDECPLPTKDALQKLTEILNLNGEVACQDSSHPAKHRNTSAVLGCLAEKLAGPASIGLLSPGILEYLLQCLKLQSHPTVMLFALIALEKFAQTSENKLTISESSISDRLVTLESWANDPDYLKRQVGFCAQWSLDNLFLKEGRQLTYEKVNLSSIRAMLNSNDVSEYLKISPHGLEARCDASSFESVRCTFCVDAGVWYYEVTVVTSGVMQIGWATRDSKFLNHEGYGIGDDEYSCAYDGCRQLIWYNARSKPHIHPCWKEGDTVGFLLDLNEKQMIFFLNGNQLPPEKQVFSSTVSGFFAAASFMSYQQCEFNFGAKPFKYPPSMKFSTFNDYAFLTAEEKIILPRHRRLALLKQVSIRENCCSLCCDEVADTQLKPCGHSDLCMDCALQLETCPLCRKEIVSRIRQISHIS.

Positions 1-16 are cleaved as a signal peptide; it reads MIVFGWAVFLASRSLG. S50 is subject to Phosphoserine. The disordered stretch occupies residues 50-99; sequence SGTDDSVDTQQQQAENSAVPTADTRSQPRDPVRPPRRGRGPHEPRRKKQN. Residues 57 to 68 show a composition bias toward polar residues; sequence DTQQQQAENSAV. Positions 83 to 97 are enriched in basic residues; it reads PPRRGRGPHEPRRKK. Residues 300–483 enclose the B30.2/SPRY domain; sequence LFLKEGRQLT…CEFNFGAKPF (184 aa). An N-linked (GlcNAc...) asparagine glycan is attached at N314. The RING-type zinc-finger motif lies at 527-562; that stretch reads CSLCCDEVADTQLKPCGHSDLCMDCALQLETCPLCR.

The protein resides in the secreted. The chain is RING finger and SPRY domain-containing protein 1 (RSPRY1) from Homo sapiens (Human).